Here is a 601-residue protein sequence, read N- to C-terminus: DNA mismatch repair protein MutL (601 aa).

Belongs to the DNA mismatch repair MutL/HexB family.

This protein is involved in the repair of mismatches in DNA. It is required for dam-dependent methyl-directed DNA mismatch repair. May act as a 'molecular matchmaker', a protein that promotes the formation of a stable complex between two or more DNA-binding proteins in an ATP-dependent manner without itself being part of a final effector complex. This is DNA mismatch repair protein MutL from Listeria monocytogenes serovar 1/2a (strain ATCC BAA-679 / EGD-e).